Reading from the N-terminus, the 787-residue chain is Penicillin-binding protein 1A (787 aa).

Residues 1–6 lie on the Cytoplasmic side of the membrane; it reads MYKSLF. A helical; Signal-anchor for type II membrane protein transmembrane segment spans residues 7-27; that stretch reads LCLKIFAVLILIGCSVTAYII. The Periplasmic segment spans residues 28-787; the sequence is YHYSHDLPDY…GMLDQSQEIY (760 aa). A transglycosylase region spans residues 49–220; that stretch reads TRIYSRDGKL…SELNPDKNYS (172 aa). The Proton donor; for transglycosylase activity role is filled by E87. Residues 398 to 711 form a transpeptidase region; that stretch reads DVIVVEPIKD…SNVVLPIFID (314 aa). S457 functions as the Acyl-ester intermediate; for transpeptidase activity in the catalytic mechanism.

In the N-terminal section; belongs to the glycosyltransferase 51 family. It in the C-terminal section; belongs to the transpeptidase family.

The protein resides in the cell inner membrane. The catalysed reaction is [GlcNAc-(1-&gt;4)-Mur2Ac(oyl-L-Ala-gamma-D-Glu-L-Lys-D-Ala-D-Ala)](n)-di-trans,octa-cis-undecaprenyl diphosphate + beta-D-GlcNAc-(1-&gt;4)-Mur2Ac(oyl-L-Ala-gamma-D-Glu-L-Lys-D-Ala-D-Ala)-di-trans,octa-cis-undecaprenyl diphosphate = [GlcNAc-(1-&gt;4)-Mur2Ac(oyl-L-Ala-gamma-D-Glu-L-Lys-D-Ala-D-Ala)](n+1)-di-trans,octa-cis-undecaprenyl diphosphate + di-trans,octa-cis-undecaprenyl diphosphate + H(+). It catalyses the reaction Preferential cleavage: (Ac)2-L-Lys-D-Ala-|-D-Ala. Also transpeptidation of peptidyl-alanyl moieties that are N-acyl substituents of D-alanine.. The protein operates within cell wall biogenesis; peptidoglycan biosynthesis. Functionally, cell wall formation. Synthesis of cross-linked peptidoglycan from the lipid intermediates. The enzyme has a penicillin-insensitive transglycosylase N-terminal domain (formation of linear glycan strands) and a penicillin-sensitive transpeptidase C-terminal domain (cross-linking of the peptide subunits). The protein is Penicillin-binding protein 1A (mrcA) of Rickettsia prowazekii (strain Madrid E).